Here is a 231-residue protein sequence, read N- to C-terminus: 3-oxoadipate CoA-transferase subunit A (231 aa).

Residue 25 to 31 (GGFGTAG) participates in CoA binding.

It belongs to the 3-oxoacid CoA-transferase subunit A family. Heterodimer.

It carries out the reaction 3-oxoadipate + succinyl-CoA = 3-oxoadipyl-CoA + succinate. The protein operates within aromatic compound metabolism; beta-ketoadipate pathway; acetyl-CoA and succinyl-CoA from 3-oxoadipate: step 1/2. This Pseudomonas putida (Arthrobacter siderocapsulatus) protein is 3-oxoadipate CoA-transferase subunit A (pcaI).